Reading from the N-terminus, the 199-residue chain is Prolactin (199 aa).

Cys-4 and Cys-11 are oxidised to a cystine. Phosphoserine occurs at positions 26, 34, and 90. 2 cysteine pairs are disulfide-bonded: Cys-58–Cys-174 and Cys-191–Cys-199.

Belongs to the somatotropin/prolactin family. In terms of assembly, interacts with PRLR.

Its subcellular location is the secreted. In terms of biological role, prolactin acts primarily on the mammary gland by promoting lactation. The sequence is that of Prolactin (PRL) from Balaenoptera borealis (Sei whale).